Consider the following 423-residue polypeptide: MSKASTFSAPKGVPDYVPPQSSEFVAVRDGLTRAARLAGYGHIELPIFEDTGLFARGVGESTDVVSKEMYTFADRGDRSVTLRPEGTAGVMRAVIEHGLDRGQLPVKLSYAGPFFRYERPQAGRYRQLQQVGVEAIGVDDPALDAEVIAIADAGFRGLGLDGFRLEITSLGDDTCRPQYRERLQEFLFALPLDEETRRRAEINPLRVLDDKRKEVREMTADAPLMLDHLSDTAKAHFDEVLAHLDALSVPYVVNPRMVRGLDYYTKTTFEFVHDGLGAQSGIGGGGRYDGLMAQLGGQPLSGIGFGLGVDRTVLALAAEGKTAGSTARCEVFGVPLGEEAKAKLVVIAQQLRAQGIRVDLAYGNRGVKGAMKAADRSGAALALVLGDRDIADGTVGIKNLATGDQESVSSADVVARVGAILGA.

The protein belongs to the class-II aminoacyl-tRNA synthetase family. In terms of assembly, homodimer.

The protein resides in the cytoplasm. It catalyses the reaction tRNA(His) + L-histidine + ATP = L-histidyl-tRNA(His) + AMP + diphosphate + H(+). This Rhodococcus jostii (strain RHA1) protein is Histidine--tRNA ligase.